The following is a 417-amino-acid chain: Citrate synthase-related protein DDB_G0287281 (417 aa).

Positions 284-317 (NKNNNNNNNNNNNNNNNNNNNNNNNNSEDDDDDN) are disordered. Low complexity predominate over residues 286–309 (NNNNNNNNNNNNNNNNNNNNNNNN).

Belongs to the citrate synthase family.

The chain is Citrate synthase-related protein DDB_G0287281 from Dictyostelium discoideum (Social amoeba).